We begin with the raw amino-acid sequence, 490 residues long: Serine hydroxymethyltransferase (490 aa).

(6S)-5,6,7,8-tetrahydrofolate contacts are provided by residues Leu179 and 183–185; that span reads GHL. Lys291 carries the N6-(pyridoxal phosphate)lysine modification. An Isoglutamyl lysine isopeptide (Lys-Gln) (interchain with Q-Cter in protein Pup) cross-link involves residue Lys362.

Belongs to the SHMT family. In terms of assembly, homodimer. Requires pyridoxal 5'-phosphate as cofactor.

It is found in the cytoplasm. It catalyses the reaction (6R)-5,10-methylene-5,6,7,8-tetrahydrofolate + glycine + H2O = (6S)-5,6,7,8-tetrahydrofolate + L-serine. Its pathway is one-carbon metabolism; tetrahydrofolate interconversion. The protein operates within amino-acid biosynthesis; glycine biosynthesis; glycine from L-serine: step 1/1. Catalyzes the reversible interconversion of serine and glycine with tetrahydrofolate (THF) serving as the one-carbon carrier. This reaction serves as the major source of one-carbon groups required for the biosynthesis of purines, thymidylate, methionine, and other important biomolecules. Also exhibits THF-independent aldolase activity toward beta-hydroxyamino acids, producing glycine and aldehydes, via a retro-aldol mechanism. The chain is Serine hydroxymethyltransferase from Mycolicibacterium smegmatis (strain ATCC 700084 / mc(2)155) (Mycobacterium smegmatis).